We begin with the raw amino-acid sequence, 109 residues long: Thioredoxin (109 aa).

The Thioredoxin domain occupies 2–109 (TNCIVELTDG…LKDFLNLYLK (108 aa)). A disulfide bridge links C33 with C36.

This sequence belongs to the thioredoxin family.

In terms of biological role, participates in various redox reactions through the reversible oxidation of its active center dithiol to a disulfide and catalyzes dithiol-disulfide exchange reactions. The polypeptide is Thioredoxin (trxA) (Buchnera aphidicola subsp. Baizongia pistaciae (strain Bp)).